We begin with the raw amino-acid sequence, 1885 residues long: Chitin synthase 5 (1885 aa).

The Myosin motor domain maps to M1–A789. Position 99–106 (G99–T106) interacts with ATP. N-linked (GlcNAc...) asparagine glycosylation is found at N219 and N429. The segment at K601 to P649 is disordered. The span at S609–S621 shows a compositional bias: basic residues. The segment at L666–D690 is actin-binding. Residue N668 is glycosylated (N-linked (GlcNAc...) asparagine). A disordered region spans residues G794–L817. 2 consecutive transmembrane segments (helical) span residues W894–G914 and F929–F949. Residues Q957–F1016 form the Cytochrome b5 heme-binding domain. N-linked (GlcNAc...) asparagine glycans are attached at residues N1043 and N1068. The helical transmembrane segment at I1205–L1225 threads the bilayer. N-linked (GlcNAc...) asparagine glycosylation is found at N1462 and N1568. 3 helical membrane passes run L1599–L1619, V1626–I1646, and M1653–L1673. N-linked (GlcNAc...) asparagine glycosylation is found at N1759 and N1790. A DEK-C domain is found at L1827 to S1882.

It in the N-terminal section; belongs to the TRAFAC class myosin-kinesin ATPase superfamily. Myosin family. In the C-terminal section; belongs to the chitin synthase family. Class V subfamily. Maximal activity requires trypsin activation, suggesting a zymogenic nature.

It is found in the cell membrane. Its subcellular location is the membrane. It catalyses the reaction [(1-&gt;4)-N-acetyl-beta-D-glucosaminyl](n) + UDP-N-acetyl-alpha-D-glucosamine = [(1-&gt;4)-N-acetyl-beta-D-glucosaminyl](n+1) + UDP + H(+). Polymerizes chitin, a structural polymer of the cell wall and septum, by transferring the sugar moiety of UDP-GlcNAc to the non-reducing end of the growing chitin polymer. CHS5 is required for the sustained growth at 37 degrees Celsius and is of critical importance for virulence. Especially important at infection temperatures for maintaining the cell wall integrity of developing yeast buds, elongating tips of hyphae, and random sites of expansion in sclerotic forms. The polypeptide is Chitin synthase 5 (Exophiala dermatitidis (strain ATCC 34100 / CBS 525.76 / NIH/UT8656) (Black yeast)).